The chain runs to 158 residues: Histone H2B.1 (158 aa).

2 positions are modified to N6-acetyllysine: K7 and K25. Disordered stretches follow at residues 26–45 and 135–158; these read AAAGKDGKAGIMTPKKPKKG and VHNFESETSKKNSQGRKRGRGQQT. Positions 135-144 are enriched in basic and acidic residues; it reads VHNFESETSK. Basic residues predominate over residues 147–158; the sequence is SQGRKRGRGQQT.

It belongs to the histone H2B family. As to quaternary structure, the nucleosome is a histone octamer containing two molecules each of H2A, H2B, H3 and H4 assembled in one H3-H4 heterotetramer and two H2A-H2B heterodimers. The octamer wraps approximately 147 bp of DNA. Can be acetylated to form H2BK6ac and H2BK33ac. In terms of tissue distribution, expressed in the generative cell within the bicellular pollen. Not detected in other reproductive or vegetative tissues.

It localises to the nucleus. It is found in the chromosome. Its function is as follows. Core component of nucleosome. Nucleosomes wrap and compact DNA into chromatin, limiting DNA accessibility to the cellular machineries which require DNA as a template. Histones thereby play a central role in transcription regulation, DNA repair, DNA replication and chromosomal stability. DNA accessibility is regulated via a complex set of post-translational modifications of histones, also called histone code, and nucleosome remodeling. In Lilium longiflorum (Trumpet lily), this protein is Histone H2B.1.